A 100-amino-acid polypeptide reads, in one-letter code: Virion membrane protein OPG135 (100 aa).

An N-terminal signal peptide occupies residues 1–22; the sequence is MSCYTAILKSVGGLALFQVANG. Topologically, residues 23–45 are intravirion; sequence AIDLCRHFFMYFCEQKLRPNSFW. The helical transmembrane segment at 46-66 threads the bilayer; it reads FVVVRAIASMIMYLVLGIALL. Residues 67–83 are Virion surface-facing; sequence YISEQDDKKNTNNDSNS. The tract at residues 75–100 is disordered; that stretch reads KNTNNDSNSNNDKRNVSSINSNSSHK. 3 N-linked (GlcNAc...) asparagine; by host glycosylation sites follow: Asn-79, Asn-89, and Asn-96.

It belongs to the chordopoxvirinae A9 family.

It localises to the virion membrane. Its subcellular location is the host cytoplasm. In terms of biological role, envelope protein. Required for an early step in virion morphogenesis. The protein is Virion membrane protein OPG135 (OPG135) of Monkeypox virus.